Consider the following 346-residue polypeptide: Phosphoribosylformylglycinamidine cyclo-ligase (346 aa).

This sequence belongs to the AIR synthase family.

The protein resides in the cytoplasm. The catalysed reaction is 2-formamido-N(1)-(5-O-phospho-beta-D-ribosyl)acetamidine + ATP = 5-amino-1-(5-phospho-beta-D-ribosyl)imidazole + ADP + phosphate + H(+). The protein operates within purine metabolism; IMP biosynthesis via de novo pathway; 5-amino-1-(5-phospho-D-ribosyl)imidazole from N(2)-formyl-N(1)-(5-phospho-D-ribosyl)glycinamide: step 2/2. The sequence is that of Phosphoribosylformylglycinamidine cyclo-ligase from Prochlorococcus marinus (strain NATL1A).